A 770-amino-acid chain; its full sequence is Cyclopiane-type diterpene synthase (770 aa).

Positions 5-335 are terpene cyclase; it reads ITDEYAVGID…VPRYCKVDRN (331 aa). Asp-97 and Asp-101 together coordinate Mg(2+). Substrate contacts are provided by residues Asp-97, Asp-101, 190–193, Asn-234, 238–242, and 328–329; these read RIVD, SWDKE, and RY. Residues 97–101 carry the DDXXD 1 motif; the sequence is DDETD. The NSE/DTE signature appears at 234–242; sequence NDLFSWDKE. The tract at residues 336–720 is prenyltransferase; sequence PYKDHLEKYG…WALRLLIMKL (385 aa). Residues 371-397 form a disordered region; that stretch reads NQLKEPSSSTYKTHFSPLEPNPGPEQT. Residues 374-383 show a composition bias toward polar residues; that stretch reads KEPSSSTYKT. Isopentenyl diphosphate contacts are provided by Lys-423, Arg-426, and His-455. Positions 462 and 466 each coordinate Mg(2+). The DDXXD 2 motif lies at 462 to 466; sequence DDIQD. Dimethylallyl diphosphate is bound at residue Arg-471. An isopentenyl diphosphate-binding site is contributed by Arg-472. Residues Lys-548, Thr-549, Gln-584, Asn-591, Lys-620, and Lys-630 each contribute to the dimethylallyl diphosphate site.

The protein in the N-terminal section; belongs to the terpene synthase family. In the C-terminal section; belongs to the FPP/GGPP synthase family. In terms of assembly, hexamer. Mg(2+) serves as cofactor.

It catalyses the reaction isopentenyl diphosphate + (2E,6E)-farnesyl diphosphate = (2E,6E,10E)-geranylgeranyl diphosphate + diphosphate. The catalysed reaction is (2E,6E,10E)-geranylgeranyl diphosphate + H2O = (+)-penichrysol + diphosphate. It functions in the pathway secondary metabolite biosynthesis; terpenoid biosynthesis. Bifunctional terpene synthase converts dimethylallyl diphosphate (DMAPP) and isopentenyl diphosphate (IPP) into a cyclopiane-type diterpene. The C-terminal prenyltransferase (PT) domain of PcCS catalyzes formation of geranylgeranyl pyrophosphate (GGPP), whereas the N-terminal terpene cyclase (TC) domain catalyzes the cyclization of GGPP to the cyclopiane-type diterpene penichrysol. This is Cyclopiane-type diterpene synthase from Penicillium chrysogenum (Penicillium notatum).